We begin with the raw amino-acid sequence, 157 residues long: Probable succinate transporter subunit YjjB (157 aa).

A run of 4 helical transmembrane segments spans residues 6 to 26, 55 to 75, 87 to 107, and 129 to 149; these read FFMA…GFAM, AGFN…SIGI, VFTV…TAMI, and FLKA…PGLW.

Belongs to the ThrE exporter (TC 2.A.79) family. In terms of assembly, the transporter is composed of YjjB and YjjP.

It is found in the cell inner membrane. Functionally, involved in succinate export with YjjP. Both proteins are required for export. In Salmonella arizonae (strain ATCC BAA-731 / CDC346-86 / RSK2980), this protein is Probable succinate transporter subunit YjjB.